Reading from the N-terminus, the 221-residue chain is Sugar transporter SWEET1 (221 aa).

Transmembrane regions (helical) follow at residues 3 to 23 (AGGF…LGMF), 42 to 62 (VQFL…SYGA), 68 to 88 (ILIV…LAYL), 96 to 116 (VVLL…GYFW), 126 to 146 (LQLL…SPLA), 160 to 180 (LSYP…LYGF), and 186 to 206 (YIMV…WLFW). A MtN3/slv 1 domain is found at 10–94 (LIYGACVVFT…LAYLHYCPRK (85 aa)). The MtN3/slv 2 domain maps to 127–212 (QLLGLFCSVF…WLFWKYPQEQ (86 aa)). The segment at 149–221 (AKVIQTKSTQ…QDRNYWFLQT (73 aa)) is mediates interaction with TRPV2.

This sequence belongs to the SWEET sugar transporter family. Interacts with TRPV2; the interaction probably occurs intracellularly and depends on TRPV2 N-glycosylation.

The protein localises to the golgi apparatus membrane. The protein resides in the cell membrane. In terms of biological role, mediates sugar transport across membranes. May stimulate V(D)J recombination by the activation of RAG1. This chain is Sugar transporter SWEET1 (SLC50A1), found in Papio anubis (Olive baboon).